We begin with the raw amino-acid sequence, 420 residues long: Phosphoribosylamine--glycine ligase (420 aa).

The region spanning 108–314 (KEIMVKYGVS…FAQNITDILD (207 aa)) is the ATP-grasp domain. 134–195 (IEKHGAPIVV…EEFLEGEEFS (62 aa)) provides a ligand contact to ATP. Positions 284 and 286 each coordinate Mg(2+).

It belongs to the GARS family. It depends on Mg(2+) as a cofactor. Mn(2+) is required as a cofactor.

It catalyses the reaction 5-phospho-beta-D-ribosylamine + glycine + ATP = N(1)-(5-phospho-beta-D-ribosyl)glycinamide + ADP + phosphate + H(+). It participates in purine metabolism; IMP biosynthesis via de novo pathway; N(1)-(5-phospho-D-ribosyl)glycinamide from 5-phospho-alpha-D-ribose 1-diphosphate: step 2/2. In Streptococcus pneumoniae (strain ATCC BAA-255 / R6), this protein is Phosphoribosylamine--glycine ligase.